Here is a 429-residue protein sequence, read N- to C-terminus: Adenylosuccinate synthetase (429 aa).

GTP contacts are provided by residues 12–18 (GDEGKGK) and 40–42 (GHT). The Proton acceptor role is filled by aspartate 13. Positions 13 and 40 each coordinate Mg(2+). Residues 13–16 (DEGK), 38–41 (NAGH), threonine 128, arginine 142, glutamine 223, threonine 238, and arginine 302 each bind IMP. Catalysis depends on histidine 41, which acts as the Proton donor. 298-304 (TVTGRPR) is a substrate binding site. GTP contacts are provided by residues arginine 304, 330–332 (LLD), and 412–414 (SVG).

Belongs to the adenylosuccinate synthetase family. As to quaternary structure, homodimer. It depends on Mg(2+) as a cofactor.

It localises to the cytoplasm. The enzyme catalyses IMP + L-aspartate + GTP = N(6)-(1,2-dicarboxyethyl)-AMP + GDP + phosphate + 2 H(+). It participates in purine metabolism; AMP biosynthesis via de novo pathway; AMP from IMP: step 1/2. Its function is as follows. Plays an important role in the de novo pathway of purine nucleotide biosynthesis. Catalyzes the first committed step in the biosynthesis of AMP from IMP. The chain is Adenylosuccinate synthetase from Lactobacillus helveticus (strain DPC 4571).